A 244-amino-acid chain; its full sequence is Methylthioribulose-1-phosphate dehydratase (244 aa).

Cys-89 serves as a coordination point for substrate. Zn(2+)-binding residues include His-107 and His-109. The active-site Proton donor/acceptor is Glu-130. Position 192 (His-192) interacts with Zn(2+).

It belongs to the aldolase class II family. MtnB subfamily. The cofactor is Zn(2+).

It is found in the cytoplasm. It carries out the reaction 5-(methylsulfanyl)-D-ribulose 1-phosphate = 5-methylsulfanyl-2,3-dioxopentyl phosphate + H2O. It functions in the pathway amino-acid biosynthesis; L-methionine biosynthesis via salvage pathway; L-methionine from S-methyl-5-thio-alpha-D-ribose 1-phosphate: step 2/6. Catalyzes the dehydration of methylthioribulose-1-phosphate (MTRu-1-P) into 2,3-diketo-5-methylthiopentyl-1-phosphate (DK-MTP-1-P). The sequence is that of Methylthioribulose-1-phosphate dehydratase from Saccharomyces cerevisiae (strain AWRI1631) (Baker's yeast).